A 70-amino-acid chain; its full sequence is MKVYCLLLVLLVGLVSQAHGQLDKKCQMVCTFDYRPVCGSDGRTYPNKCTLTSTACMSQRSITVFHDGEC.

An N-terminal signal peptide occupies residues 1 to 20 (MKVYCLLLVLLVGLVSQAHG). Positions 21-70 (QLDKKCQMVCTFDYRPVCGSDGRTYPNKCTLTSTACMSQRSITVFHDGEC) constitute a Kazal-like domain. 3 cysteine pairs are disulfide-bonded: Cys-26–Cys-56, Cys-30–Cys-49, and Cys-38–Cys-70.

Belongs to the conopeptide P-like superfamily. In terms of tissue distribution, expressed by the venom duct.

It is found in the secreted. In terms of biological role, acts as a neurotoxin by inhibiting an ion channel. May also act as a serine protease inhibitor, since it possess the kazal serine protease inhibitor signature. This chain is Turripeptide Gsp9.3, found in Gemmula speciosa (Splendid gem-turris).